The primary structure comprises 327 residues: Lipoyl synthase (327 aa).

Residues C66, C71, C77, C92, C96, C99, and S306 each contribute to the [4Fe-4S] cluster site. Positions 78 to 295 (FSKGTATFMI…EKEAYELGFS (218 aa)) constitute a Radical SAM core domain.

The protein belongs to the radical SAM superfamily. Lipoyl synthase family. [4Fe-4S] cluster serves as cofactor.

It is found in the cytoplasm. The enzyme catalyses [[Fe-S] cluster scaffold protein carrying a second [4Fe-4S](2+) cluster] + N(6)-octanoyl-L-lysyl-[protein] + 2 oxidized [2Fe-2S]-[ferredoxin] + 2 S-adenosyl-L-methionine + 4 H(+) = [[Fe-S] cluster scaffold protein] + N(6)-[(R)-dihydrolipoyl]-L-lysyl-[protein] + 4 Fe(3+) + 2 hydrogen sulfide + 2 5'-deoxyadenosine + 2 L-methionine + 2 reduced [2Fe-2S]-[ferredoxin]. It participates in protein modification; protein lipoylation via endogenous pathway; protein N(6)-(lipoyl)lysine from octanoyl-[acyl-carrier-protein]: step 2/2. In terms of biological role, catalyzes the radical-mediated insertion of two sulfur atoms into the C-6 and C-8 positions of the octanoyl moiety bound to the lipoyl domains of lipoate-dependent enzymes, thereby converting the octanoylated domains into lipoylated derivatives. In Neisseria meningitidis serogroup A / serotype 4A (strain DSM 15465 / Z2491), this protein is Lipoyl synthase.